Reading from the N-terminus, the 268-residue chain is WUSCHEL-related homeobox 11 (268 aa).

A disordered region spans residues 1–35; it reads MDQEQTPHSPTRHSRSPPSSASGSTSAEPVRSRWS. Residues 16–27 show a composition bias toward low complexity; sequence SPPSSASGSTSA. Residues 29 to 93 constitute a DNA-binding region (homeobox; WUS-type); that stretch reads PVRSRWSPKP…NRRSRSRRRQ (65 aa).

Belongs to the WUS homeobox family.

Its subcellular location is the nucleus. Transcription factor which may be involved in developmental processes. The polypeptide is WUSCHEL-related homeobox 11 (WOX11) (Arabidopsis thaliana (Mouse-ear cress)).